Reading from the N-terminus, the 402-residue chain is UDP-N-acetylmuramoylalanine--D-glutamate ligase (402 aa).

Position 97 to 103 (97 to 103 (GTNGKTT)) interacts with ATP.

This sequence belongs to the MurCDEF family.

The protein resides in the cytoplasm. The enzyme catalyses UDP-N-acetyl-alpha-D-muramoyl-L-alanine + D-glutamate + ATP = UDP-N-acetyl-alpha-D-muramoyl-L-alanyl-D-glutamate + ADP + phosphate + H(+). Its pathway is cell wall biogenesis; peptidoglycan biosynthesis. Functionally, cell wall formation. Catalyzes the addition of glutamate to the nucleotide precursor UDP-N-acetylmuramoyl-L-alanine (UMA). The sequence is that of UDP-N-acetylmuramoylalanine--D-glutamate ligase from Campylobacter jejuni subsp. jejuni serotype O:6 (strain 81116 / NCTC 11828).